Here is a 2133-residue protein sequence, read N- to C-terminus: Coagulation factor VIII (2133 aa).

A signal peptide spans M1–S19. Plastocyanin-like domains are found at residues A20–C199, E207–R357, K399–C573, and N583–C730. 2 F5/8 type A domains span residues A20–R357 and K399–C730. A disulfide bond links C173 and C199. Residues N233 and N259 are each glycosylated (N-linked (GlcNAc...) asparagine). A disulfide bond links C547 and C573. N-linked (GlcNAc...) asparagine glycosylation occurs at N601. Y737, Y738, and Y742 each carry sulfotyrosine. Disordered regions lie at residues S760–Q790 and P804–Q914. The segment at S760 to Q1599 is b. Residues F761–S780 show a composition bias toward polar residues. 2 stretches are compositionally biased toward basic and acidic residues: residues L853–E862 and E868–S878. Low complexity predominate over residues K879–K888. Over residues T889–A900 the composition is skewed to polar residues. Residues N929, N985, and N1025 are each glycosylated (N-linked (GlcNAc...) asparagine). The segment at L1042–R1078 is disordered. Residues S1060–G1075 show a composition bias toward low complexity. The N-linked (GlcNAc...) asparagine glycan is linked to N1111. A disordered region spans residues P1160 to S1179. Residues N1181, N1208, N1245, N1265, and N1335 are each glycosylated (N-linked (GlcNAc...) asparagine). The interval E1200 to R1221 is disordered. 2 disordered regions span residues L1358–A1391 and E1406–P1441. The span at K1378 to P1387 shows a compositional bias: basic and acidic residues. N1408 and N1611 each carry an N-linked (GlcNAc...) asparagine glycan. Plastocyanin-like domains are found at residues R1495–C1659 and G1669–C1822. In terms of domain architecture, F5/8 type A 3 spans R1495 to C1822. Intrachain disulfides connect C1633/C1659, C1822/C1970, and C1975/C2127. 2 consecutive F5/8 type C domains span residues C1822–C1970 and C1975–C2127. An N-linked (GlcNAc...) asparagine glycan is attached at N1919.

It belongs to the multicopper oxidase family. Interacts with vWF. vWF binding is essential for the stabilization of F8 in circulation. In terms of processing, proteolytically cleaved by cathepsin CTSG to produce a partially activated form.

It localises to the secreted. The protein resides in the extracellular space. Factor VIII, along with calcium and phospholipid, acts as a cofactor for factor IXa when it converts factor X to the activated form, factor Xa. The protein is Coagulation factor VIII (F8) of Sus scrofa (Pig).